An 849-amino-acid polypeptide reads, in one-letter code: G-type lectin S-receptor-like serine/threonine-protein kinase B120 (849 aa).

The first 25 residues, 1–25 (MRFFRKTSLYLSLFLYFFLYESSMA), serve as a signal peptide directing secretion. Residues 26–153 (ANTIRRGESL…DTDRPIWESF (128 aa)) form the Bulb-type lectin domain. At 26–438 (ANTIRRGESL…SEVGENRKTK (413 aa)) the chain is on the extracellular side. N-linked (GlcNAc...) asparagine glycans are attached at residues N110, N191, N210, N230, N273, and N282. The region spanning 295–332 (PDSECDQYNRCGKFGICDMKGSNGICSCIHGYEQVSVG) is the EGF-like; atypical domain. Disulfide bonds link C299–C311 and C305–C320. N-linked (GlcNAc...) asparagine glycans are attached at residues N333, N349, and N388. One can recognise a PAN domain in the interval 346 to 427 (CERNISVGED…GGSSLHIRLA (82 aa)). Cystine bridges form between C381–C402 and C385–C391. Residues 439 to 459 (IAVIVAVLVGVILIGIFALLL) form a helical membrane-spanning segment. Topologically, residues 460-849 (WRFKRKKDVS…EITSTVVLGR (390 aa)) are cytoplasmic. The 286-residue stretch at 529–814 (FCKENELGRG…TLAAPRQPTF (286 aa)) folds into the Protein kinase domain. ATP is bound by residues 535 to 543 (LGRGGFGPV) and K557. Phosphoserine is present on S563. A caM-binding region spans residues 618–635 (TKQALIDWKLRFSIIEGI). Residue D654 is the Proton acceptor of the active site. Residues S658 and S671 each carry the phosphoserine modification. Position 688 is a phosphothreonine (T688). Phosphoserine is present on residues S732 and S837. T844 bears the Phosphothreonine mark.

The protein belongs to the protein kinase superfamily. Ser/Thr protein kinase family.

It is found in the cell membrane. It carries out the reaction L-seryl-[protein] + ATP = O-phospho-L-seryl-[protein] + ADP + H(+). The catalysed reaction is L-threonyl-[protein] + ATP = O-phospho-L-threonyl-[protein] + ADP + H(+). The sequence is that of G-type lectin S-receptor-like serine/threonine-protein kinase B120 (B120) from Arabidopsis thaliana (Mouse-ear cress).